The sequence spans 152 residues: Lipoprotein signal peptidase (152 aa).

Transmembrane regions (helical) follow at residues 55-75 and 85-105; these read NKMW…VFYM and LGIS…DRVF. Catalysis depends on residues Asp-111 and Asp-129. Residues 124 to 144 traverse the membrane as a helical segment; it reads VFNIADSALCIGVVLIIIQTL.

It belongs to the peptidase A8 family.

The protein resides in the cell membrane. The enzyme catalyses Release of signal peptides from bacterial membrane prolipoproteins. Hydrolyzes -Xaa-Yaa-Zaa-|-(S,diacylglyceryl)Cys-, in which Xaa is hydrophobic (preferably Leu), and Yaa (Ala or Ser) and Zaa (Gly or Ala) have small, neutral side chains.. It functions in the pathway protein modification; lipoprotein biosynthesis (signal peptide cleavage). In terms of biological role, this protein specifically catalyzes the removal of signal peptides from prolipoproteins. This is Lipoprotein signal peptidase from Bacillus cytotoxicus (strain DSM 22905 / CIP 110041 / 391-98 / NVH 391-98).